A 102-amino-acid polypeptide reads, in one-letter code: Small ribosomal subunit protein uS10 (102 aa).

The protein belongs to the universal ribosomal protein uS10 family. Part of the 30S ribosomal subunit.

Its function is as follows. Involved in the binding of tRNA to the ribosomes. The sequence is that of Small ribosomal subunit protein uS10 from Moorella thermoacetica (strain ATCC 39073 / JCM 9320).